Consider the following 85-residue polypeptide: Three-finger toxin MALT0044C (85 aa).

An N-terminal signal peptide occupies residues Met-1–Thr-21. Intrachain disulfides connect Cys-24–Cys-45, Cys-38–Cys-63, Cys-67–Cys-78, and Cys-79–Cys-84.

It belongs to the three-finger toxin family. Short-chain subfamily. As to expression, expressed by the venom gland.

It localises to the secreted. In Micrurus altirostris (Uruguayan coral snake), this protein is Three-finger toxin MALT0044C.